A 181-amino-acid polypeptide reads, in one-letter code: Probable chemoreceptor glutamine deamidase CheD (181 aa).

This sequence belongs to the CheD family.

The enzyme catalyses L-glutaminyl-[protein] + H2O = L-glutamyl-[protein] + NH4(+). In terms of biological role, probably deamidates glutamine residues to glutamate on methyl-accepting chemotaxis receptors (MCPs), playing an important role in chemotaxis. The chain is Probable chemoreceptor glutamine deamidase CheD from Agrobacterium fabrum (strain C58 / ATCC 33970) (Agrobacterium tumefaciens (strain C58)).